A 106-amino-acid chain; its full sequence is MESSTINAKKISVLLTLFSIIGYTAYSAHESILEIRQDGKLPLDIKCEVILVTLLFTFTTVIIASPLRSIQLNKWSHQRSDLAFLNSRTNFLRIKELKEKIEKVKN.

Residues 1-12 (MESSTINAKKIS) are Cytoplasmic-facing. The chain crosses the membrane as a helical span at residues 13 to 33 (VLLTLFSIIGYTAYSAHESIL). The Lumenal segment spans residues 34–46 (EIRQDGKLPLDIK). A helical membrane pass occupies residues 47 to 67 (CEVILVTLLFTFTTVIIASPL). At 68–106 (RSIQLNKWSHQRSDLAFLNSRTNFLRIKELKEKIEKVKN) the chain is on the cytoplasmic side.

Belongs to the membrane magnesium transporter (TC 1.A.67) family. In terms of assembly, component of the ER membrane protein complex (EMC).

Its subcellular location is the endoplasmic reticulum membrane. The EMC seems to be required for efficient folding of proteins in the endoplasmic reticulum (ER). In Schizosaccharomyces pombe (strain 972 / ATCC 24843) (Fission yeast), this protein is ER membrane protein complex subunit 5 (emc5).